The sequence spans 146 residues: Nucleoside diphosphate kinase (146 aa).

Residues K11, F59, R87, T93, R104, and N114 each contribute to the ATP site. H117 acts as the Pros-phosphohistidine intermediate in catalysis.

It belongs to the NDK family. In terms of assembly, homotetramer. Requires Mg(2+) as cofactor.

The protein localises to the cytoplasm. It carries out the reaction a 2'-deoxyribonucleoside 5'-diphosphate + ATP = a 2'-deoxyribonucleoside 5'-triphosphate + ADP. It catalyses the reaction a ribonucleoside 5'-diphosphate + ATP = a ribonucleoside 5'-triphosphate + ADP. Its function is as follows. Major role in the synthesis of nucleoside triphosphates other than ATP. The ATP gamma phosphate is transferred to the NDP beta phosphate via a ping-pong mechanism, using a phosphorylated active-site intermediate. In Anaeromyxobacter sp. (strain Fw109-5), this protein is Nucleoside diphosphate kinase.